Consider the following 524-residue polypeptide: Cysteine--tRNA ligase (524 aa).

C29 is a Zn(2+) binding site. A 'HIGH' region motif is present at residues 31-41 (PTVQAAPHVGH). Residues C207, H232, and E236 each coordinate Zn(2+). Residues 246–258 (ARPASNAASADSP) are compositionally biased toward low complexity. Residues 246 to 273 (ARPASNAASADSPGPGGGEPGGGEPSSG) form a disordered region. The span at 259–270 (GPGGGEPGGGEP) shows a compositional bias: gly residues. Positions 291 to 295 (KMSKS) match the 'KMSKS' region motif. Position 294 (K294) interacts with ATP.

The protein belongs to the class-I aminoacyl-tRNA synthetase family. Monomer. It depends on Zn(2+) as a cofactor.

The protein resides in the cytoplasm. The enzyme catalyses tRNA(Cys) + L-cysteine + ATP = L-cysteinyl-tRNA(Cys) + AMP + diphosphate. This is Cysteine--tRNA ligase from Frankia casuarinae (strain DSM 45818 / CECT 9043 / HFP020203 / CcI3).